The following is a 350-amino-acid chain: MVTQAATRPSNDAGQDGVTEPDILAVARQQVLERGEGLNQEQVLQVLQLSEDRLEELLVLAHDVRMRWCGPEVEVEGIISLKTGGCPEDCHFCSQSGLFSSPVRSAWLDIPSLVEAAKQTAKSGATEFCIVAAVRGPDARLLSQVAAGIEAIRNEVEINVACSLGMLTAEQVEQLAAMGVHRYNHNLETARSYFTNVVTTHTWEERWQTLTMVRDAGMEVCCGGILGMGETLEQRAEFAANLAELDPDEVPLNFLNPRPGTPFGDLEVLPAGEALKAVGAFRLALPRTMLRFAGGREITLGDLGAKRGILGGINAVIVGNYLTTLGRPAEADLELLEDLQMPLKALNASL.

The segment covering 1-13 has biased composition (polar residues); sequence MVTQAATRPSNDA. The tract at residues 1–20 is disordered; sequence MVTQAATRPSNDAGQDGVTE. In terms of domain architecture, Radical SAM core spans 71 to 296; the sequence is PEVEVEGIIS…RTMLRFAGGR (226 aa). Positions 86, 90, and 93 each coordinate [4Fe-4S] cluster. Residues Cys129, Cys162, Cys221, and Arg291 each coordinate [2Fe-2S] cluster.

This sequence belongs to the radical SAM superfamily. Biotin synthase family. In terms of assembly, homodimer. [4Fe-4S] cluster serves as cofactor. It depends on [2Fe-2S] cluster as a cofactor.

The enzyme catalyses (4R,5S)-dethiobiotin + (sulfur carrier)-SH + 2 reduced [2Fe-2S]-[ferredoxin] + 2 S-adenosyl-L-methionine = (sulfur carrier)-H + biotin + 2 5'-deoxyadenosine + 2 L-methionine + 2 oxidized [2Fe-2S]-[ferredoxin]. The protein operates within cofactor biosynthesis; biotin biosynthesis; biotin from 7,8-diaminononanoate: step 2/2. Catalyzes the conversion of dethiobiotin (DTB) to biotin by the insertion of a sulfur atom into dethiobiotin via a radical-based mechanism. The polypeptide is Biotin synthase (Mycobacterium ulcerans (strain Agy99)).